The chain runs to 214 residues: Putative 3-methyladenine DNA glycosylase (214 aa).

Belongs to the DNA glycosylase MPG family.

This is Putative 3-methyladenine DNA glycosylase from Mycobacterium leprae (strain Br4923).